Here is an 87-residue protein sequence, read N- to C-terminus: Down syndrome critical region protein 10 (87 aa).

In terms of tissue distribution, expressed in placenta and testis.

The chain is Down syndrome critical region protein 10 (DSCR10) from Homo sapiens (Human).